A 175-amino-acid polypeptide reads, in one-letter code: Chorismate pyruvate-lyase (175 aa).

The substrate site is built by Met-36, Arg-78, Leu-116, and Glu-157.

The protein belongs to the UbiC family. Monomer.

The protein resides in the cytoplasm. The enzyme catalyses chorismate = 4-hydroxybenzoate + pyruvate. It functions in the pathway cofactor biosynthesis; ubiquinone biosynthesis. In terms of biological role, removes the pyruvyl group from chorismate, with concomitant aromatization of the ring, to provide 4-hydroxybenzoate (4HB) for the ubiquinone pathway. This is Chorismate pyruvate-lyase from Hamiltonella defensa subsp. Acyrthosiphon pisum (strain 5AT).